Here is a 419-residue protein sequence, read N- to C-terminus: Gustatory receptor for bitter taste 93a (419 aa).

At 1 to 55 (MFSSSSAMTGKRAESWSRLLLLWLYRCARGLLVLSSSLDRDKLQLKATKQGSRNR) the chain is on the cytoplasmic side. The helical transmembrane segment at 56 to 76 (FLHILWRCIVVMIYAGLWPML) threads the bilayer. Residues 77 to 90 (TSAVIGKRLESYAD) are Extracellular-facing. The chain crosses the membrane as a helical span at residues 91–111 (VLALAQSMSVSILAVISFVIQ). Over 112-145 (ARGENQFREVLNRYLALYQRICLTTRLRHLFPTK) the chain is Cytoplasmic. The chain crosses the membrane as a helical span at residues 146-166 (FVVFFLLKLFFTLCGCFHEII). Residues 167 to 184 (PLFENSHFDDISQMVGTG) are Extracellular-facing. A helical membrane pass occupies residues 185–205 (FGIYMWLGTLCVLDACFLGFL). Topologically, residues 206–277 (VSGILYEHMA…NSFRRILQWQ (72 aa)) are cytoplasmic. Residues 278 to 298 (ILFYIYLNFINICLMLYQYIL) traverse the membrane as a helical segment. The Extracellular portion of the chain corresponds to 299 to 305 (HFLNDDE). The helical transmembrane segment at 306-326 (VVFVSIVMAFVKLANLVLLMM) threads the bilayer. The Cytoplasmic segment spans residues 327 to 383 (CADYTVRQSEVPKKLPLDIVCSDMDERWDKSVETFLGQLQTQRLEIKVLGFFHLNNE). The helical transmembrane segment at 384–404 (FILLILSAIISYLFILIQFGI) threads the bilayer. Residues 405–419 (TGGFEASEDIKNRFD) lie on the Extracellular side of the membrane.

It belongs to the insect chemoreceptor superfamily. Gustatory receptor (GR) family. Gr93a subfamily. In terms of tissue distribution, in larvae, is expressed in neurons of the dorsal pharyngeal sense organs.

Its subcellular location is the cell membrane. In terms of biological role, gustatory receptor required for response to the bitter in taste neurons. Gr93a cells respond to bitter compounds such as caffeine. Flies avoid bitter substances, suggesting that Gr93a neuron activity is sufficient to mediate avoidance behavior. This Drosophila melanogaster (Fruit fly) protein is Gustatory receptor for bitter taste 93a (Gr93a).